Here is a 138-residue protein sequence, read N- to C-terminus: Small ribosomal subunit protein uS11 (138 aa).

Over residues 1–12 (MPPKKANAAGPK) the composition is skewed to low complexity. Residues 1–23 (MPPKKANAAGPKKGQKTRKREKK) are disordered. Positions 13-22 (KGQKTRKREK) are enriched in basic residues.

This sequence belongs to the universal ribosomal protein uS11 family. In terms of assembly, part of the 30S ribosomal subunit. Interacts with proteins S7 and S18. Binds to IF-3.

Functionally, located on the platform of the 30S subunit, it bridges several disparate RNA helices of the 16S rRNA. Forms part of the Shine-Dalgarno cleft in the 70S ribosome. The chain is Small ribosomal subunit protein uS11 from Mycobacterium leprae (strain Br4923).